The sequence spans 322 residues: CXXC-type zinc finger protein 5 (322 aa).

Residues 1-10 (MSSLGGGSQD) are compositionally biased toward gly residues. A disordered region spans residues 1 to 100 (MSSLGGGSQD…SGGGSMMGGE (100 aa)). 2 stretches are compositionally biased toward low complexity: residues 11–20 (AGGSSSSSTN) and 28–52 (SGPKAGAADKSAVVAAAAPASVADD). A Phosphothreonine modification is found at Thr-53. A compositionally biased stretch (gly residues) spans 87–97 (SSGGSGGGSMM). The segment at 256 to 297 (GKKKRKRCGMCAPCRRRINCEQCSSCRNRKTGHQICKFRKCE) adopts a CXXC-type zinc-finger fold. Residues 257 to 262 (KKKRKR) carry the Nuclear localization signal motif. Zn(2+)-binding residues include Cys-263, Cys-266, Cys-269, Cys-275, Cys-278, Cys-281, Cys-291, and Cys-296.

Interacts with DVL1. Interacts with RBPJ.

It localises to the nucleus. It is found in the cytoplasm. Functionally, may indirectly participate in activation of the NF-kappa-B and MAPK pathways. Acts as a mediator of BMP4-mediated modulation of canonical Wnt signaling activity in neural stem cells. Required for DNA damage-induced ATM phosphorylation, p53 activation and cell cycle arrest. Involved in myelopoiesis. Transcription factor. Binds to the oxygen responsive element of COX4I2 and represses its transcription under hypoxia conditions (4% oxygen), as well as normoxia conditions (20% oxygen). May repress COX4I2 transactivation induced by CHCHD2 and RBPJ. Binds preferentially to DNA containing cytidine-phosphate-guanosine (CpG) dinucleotides over CpH (H=A, T, and C), hemimethylated-CpG and hemimethylated-hydroxymethyl-CpG. The polypeptide is CXXC-type zinc finger protein 5 (CXXC5) (Homo sapiens (Human)).